The primary structure comprises 415 residues: Queuine tRNA-ribosyltransferase accessory subunit 2 (415 aa).

Zn(2+)-binding residues include cysteine 351, cysteine 353, cysteine 356, and histidine 382.

It belongs to the queuine tRNA-ribosyltransferase family. QTRT2 subfamily. As to quaternary structure, heterodimer of a catalytic subunit qtrt1 and an accessory subunit qtrt2. The cofactor is Zn(2+).

The protein resides in the cytoplasm. It localises to the mitochondrion outer membrane. Functionally, non-catalytic subunit of the queuine tRNA-ribosyltransferase (TGT) that catalyzes the base-exchange of a guanine (G) residue with queuine (Q) at position 34 (anticodon wobble position) in tRNAs with GU(N) anticodons (tRNA-Asp, -Asn, -His and -Tyr), resulting in the hypermodified nucleoside queuosine (7-(((4,5-cis-dihydroxy-2-cyclopenten-1-yl)amino)methyl)-7-deazaguanosine). This Xenopus laevis (African clawed frog) protein is Queuine tRNA-ribosyltransferase accessory subunit 2.